A 149-amino-acid polypeptide reads, in one-letter code: Protein FAM72C (149 aa).

The protein belongs to the FAM72 family.

The chain is Protein FAM72C (FAM72C) from Homo sapiens (Human).